The chain runs to 370 residues: MKIEAIDVTLVDVPASRPIQMSFTTVQKQSYAIVQIRAGGLVGIGEGSSVGGPTWSSECAETIKVIIETYLAPLLIGKDATNLRELQHLMERAVTGNYSAKAAIDVALHDLKARSLNLPLSDLIGGAIQQGIPIAWTLASGDTQRDIAIAEEMIERRRHNRFKIKLGVRSPADDLRHIEKIIERVGDRAAVRVDINQAWDENTASVWIPRLEAAGVELVEQPVARSNFDALRRLSADNGVAILADESLSSLASAFELARHHCVDAFSLKLCNMGGVANTLKVAAIAEASGIASYGGTMLDSSIGTAAALHVYATLPTMPFECELLGPWVLADTLTQTQLEIKDFEIRLPSGPGLGVDIDPDKLRHFTRAG.

K165 functions as the Proton acceptor in the catalytic mechanism. Positions 194, 220, and 245 each coordinate Mn(2+). Catalysis depends on E323, which acts as the Proton donor.

It belongs to the mandelate racemase/muconate lactonizing enzyme family. The cofactor is Mn(2+).

The enzyme catalyses 2-[(2R)-2-chloro-2,5-dihydro-5-oxofuryl]acetate = 3-chloro-cis,cis-muconate + H(+). Its pathway is aromatic compound metabolism; 3-chlorocatechol degradation. Its function is as follows. Highly active toward chlorinated substrates but retains diminished activity toward the non-chlorinated substrates. The polypeptide is Chloromuconate cycloisomerase (clcB) (Pseudomonas putida (Arthrobacter siderocapsulatus)).